The chain runs to 163 residues: Nucleotide-binding protein CJJ81176_0398 (163 aa).

It belongs to the YajQ family.

Its function is as follows. Nucleotide-binding protein. This is Nucleotide-binding protein CJJ81176_0398 from Campylobacter jejuni subsp. jejuni serotype O:23/36 (strain 81-176).